The chain runs to 155 residues: Transcriptional repressor NrdR (155 aa).

A zinc finger spans residues 3–34 (CPFCNQTDTKVIDSRLVADGVQVRRRRECQAC). The ATP-cone domain occupies 49 to 139 (PKVIKQDGTR…VYRSFQDISE (91 aa)).

Belongs to the NrdR family. Zn(2+) is required as a cofactor.

In terms of biological role, negatively regulates transcription of bacterial ribonucleotide reductase nrd genes and operons by binding to NrdR-boxes. This chain is Transcriptional repressor NrdR, found in Teredinibacter turnerae (strain ATCC 39867 / T7901).